The primary structure comprises 82 residues: Conotoxin MiK42 (82 aa).

The first 22 residues, 1–22 (MKLTCALIVAMLLLTACQLITT), serve as a signal peptide directing secretion. Residues 23–49 (DDFRGRQQYRTARSRTKMQNYKIFRLT) constitute a propeptide that is removed on maturation. 3 cysteine pairs are disulfide-bonded: Cys52/Cys67, Cys59/Cys70, and Cys66/Cys80.

Belongs to the conotoxin O1 superfamily. In terms of tissue distribution, expressed by the venom duct.

It localises to the secreted. The sequence is that of Conotoxin MiK42 from Conus miles (Soldier cone).